The sequence spans 716 residues: Zinc finger protein on ecdysone puffs (716 aa).

Disordered stretches follow at residues 103–168 (PSLL…GGIR) and 182–208 (KNAN…ESPY). Positions 188–203 (KKKEPTPGEKKIESPT) are enriched in basic and acidic residues. Serine 201 carries the phosphoserine modification. Threonine 203 bears the Phosphothreonine mark. Phosphoserine is present on serine 206. The C2H2-type 1 zinc finger occupies 216 to 240 (FYCHLCKKHMWDANSFENHIKGRTH). The C2H2-type 2; atypical zinc-finger motif lies at 288 to 310 (DYCTMCDLNFHGHISTHRKSEGH). The segment at 319–343 (PKCIECNKEFATRIDYDTHLLSAEH) adopts a C2H2-type 3 zinc-finger fold. Positions 350-359 (NNTKVGERKR) are enriched in basic and acidic residues. Positions 350–447 (NNTKVGERKR…EEEEVALPVD (98 aa)) are disordered. The Nuclear localization signal signature appears at 379-383 (KRKKK). Over residues 386 to 401 (KKEGEAADGEAKKEGA) the composition is skewed to basic and acidic residues. Residues 405–414 (EGAEGDEAEG) are compositionally biased toward acidic residues. Residues 415–431 (EEAKEGEEAADETKEGD) are compositionally biased toward basic and acidic residues. Acidic residues predominate over residues 432–447 (ELNESQEEEEVALPVD). Residues 489-513 (YECSVCSKFFDTEVTAEIHSRTATH) form a C2H2-type 4 zinc finger. A disordered region spans residues 534–716 (RAAAALEENE…QRARGRYNRY (183 aa)). Positions 541–551 (ENERKKRKVEE) are enriched in basic and acidic residues. Positions 544–548 (RKKRK) match the Nuclear localization signal motif. The segment covering 560-638 (AAEETTEGAE…GQEGEQEPEP (79 aa)) has biased composition (acidic residues). The segment covering 639–656 (EPAPVQTPAPAEPAPPAK) has biased composition (pro residues). The span at 657–704 (TPAKTPTKAAAPAAVASPAAAATSADASPSPAKKATPARAAAGAKATP) shows a compositional bias: low complexity. Residues serine 673, serine 684, and serine 686 each carry the phosphoserine modification. Threonine 692 is subject to Phosphothreonine. The span at 707–716 (QRARGRYNRY) shows a compositional bias: basic residues.

It is found in the nucleus. The protein localises to the chromosome. Its function is as follows. May play a role in the process of early and late gene activation, or possibly in RNA processing, for a defined set of developmentally regulated loci. This is Zinc finger protein on ecdysone puffs (Pep) from Drosophila melanogaster (Fruit fly).